The following is a 237-amino-acid chain: Uracil-DNA glycosylase (237 aa).

Residue aspartate 77 is the Proton acceptor of the active site.

It belongs to the uracil-DNA glycosylase (UDG) superfamily. UNG family.

Its subcellular location is the cytoplasm. The enzyme catalyses Hydrolyzes single-stranded DNA or mismatched double-stranded DNA and polynucleotides, releasing free uracil.. Functionally, excises uracil residues from the DNA which can arise as a result of misincorporation of dUMP residues by DNA polymerase or due to deamination of cytosine. In Acinetobacter baylyi (strain ATCC 33305 / BD413 / ADP1), this protein is Uracil-DNA glycosylase.